Here is a 502-residue protein sequence, read N- to C-terminus: 4-hydroxy-3-methylbut-2-enyl diphosphate reductase, chloroplastic (502 aa).

Residues 1 to 48 (MQVLPQTRVQGVPSGRNLSCSKAVGGTPLRALTRDVVRPARSVNVHVV) constitute a chloroplast transit peptide. Residue Cys-140 participates in [4Fe-4S] cluster binding. Residue His-170 participates in (2E)-4-hydroxy-3-methylbut-2-enyl diphosphate binding. Cys-232 contributes to the [4Fe-4S] cluster binding site. His-260 is a binding site for (2E)-4-hydroxy-3-methylbut-2-enyl diphosphate. Glu-262 serves as the catalytic Proton donor. Residue Thr-325 participates in (2E)-4-hydroxy-3-methylbut-2-enyl diphosphate binding. Residue Cys-363 participates in [4Fe-4S] cluster binding. Residues 398–400 (SSN) and Ser-461 contribute to the (2E)-4-hydroxy-3-methylbut-2-enyl diphosphate site.

Belongs to the IspH family. Homodimer. The cofactor is [4Fe-4S] cluster.

The protein localises to the plastid. It localises to the chloroplast stroma. The catalysed reaction is dimethylallyl diphosphate + 2 oxidized [2Fe-2S]-[ferredoxin] + H2O = (2E)-4-hydroxy-3-methylbut-2-enyl diphosphate + 2 reduced [2Fe-2S]-[ferredoxin] + 2 H(+). It carries out the reaction isopentenyl diphosphate + 2 oxidized [2Fe-2S]-[ferredoxin] + H2O = (2E)-4-hydroxy-3-methylbut-2-enyl diphosphate + 2 reduced [2Fe-2S]-[ferredoxin] + 2 H(+). Its pathway is isoprenoid biosynthesis; dimethylallyl diphosphate biosynthesis; dimethylallyl diphosphate from (2E)-4-hydroxy-3-methylbutenyl diphosphate: step 1/1. The protein operates within isoprenoid biosynthesis; isopentenyl diphosphate biosynthesis via DXP pathway; isopentenyl diphosphate from 1-deoxy-D-xylulose 5-phosphate: step 6/6. Enzyme of the plastid non-mevalonate pathway for isoprenoid biosynthesis that converts 1-hydroxy-2-methyl-2-(E)-butenyl 4-diphosphate into isopentenyl diphosphate (IPP) and dimethylallyl diphosphate (DMAPP). The sequence is that of 4-hydroxy-3-methylbut-2-enyl diphosphate reductase, chloroplastic from Botryococcus braunii (Green alga).